The chain runs to 296 residues: PYK10-binding protein 2 (296 aa).

Residues 1 to 20 (MAQKVEAKGGKGGNQWDDGS) are disordered. The residue at position 2 (A2) is an N-acetylalanine. Jacalin-type lectin domains lie at 2–142 (AQKV…YFAP) and 150–293 (AKPL…HVRP).

It belongs to the jacalin lectin family. As to quaternary structure, component of the PYK10 complex, at least composed of PYK10/BGLU23, BGLU21, BGLU22, JAL22, JAL23, PBP1/JAL30, PBP2/JAL31, JAL32, JAL33, JAL34, JAL35, GLL22 and GLL23.

Its function is as follows. Polymerizer-type lectin that may facilitate the correct polymerization of BGLU23/PYK10 upon tissue damage. Activates BGLU21, BGLU22 and BGLU23. The polypeptide is PYK10-binding protein 2 (PBP2) (Arabidopsis thaliana (Mouse-ear cress)).